The following is a 147-amino-acid chain: Hemoglobin subunit beta (147 aa).

One can recognise a Globin domain in the interval 3–147; that stretch reads EWTDKERSII…VVSALGKQYH (145 aa). Histidine 64 and histidine 93 together coordinate heme b.

It belongs to the globin family. In terms of assembly, hb1 is a heterotetramer of two alpha chains and two beta chains. As to expression, red blood cells.

Functionally, involved in oxygen transport from gills to the various peripheral tissues. The chain is Hemoglobin subunit beta (hbb) from Trematomus bernacchii (Emerald rockcod).